The sequence spans 563 residues: Rab escort protein 1 (563 aa).

Residues 538-563 are disordered; it reads ELFKEETSPAENTTEEENDGGVEIED. Residues 550 to 563 show a composition bias toward acidic residues; it reads TTEEENDGGVEIED.

It belongs to the Rab GDI family. Heterotrimer composed of the alpha subunit RGTA, the beta subunit RGTB and REP; within this trimer, RGTA and RGTB form the catalytic component, while REP mediates peptide substrate binding. As to expression, expressed in roots, leaves and flowers.

Its subcellular location is the cytoplasm. Functionally, substrate-binding subunit of the Rab geranylgeranyltransferase (GGTase) complex. Binds unprenylated Rab proteins and presents the substrate peptide to the catalytic component composed of the alpha subunit RGTA and the beta subunit RGTB. Preferentially binds the GDP-bound form of Rab and stimulates geranylgeranylation of various Rab GTPases in vitro. This chain is Rab escort protein 1, found in Arabidopsis thaliana (Mouse-ear cress).